A 149-amino-acid polypeptide reads, in one-letter code: Nucleoside diphosphate kinase (149 aa).

6 residues coordinate ATP: K9, F57, R85, T91, R102, and N112. The active-site Pros-phosphohistidine intermediate is H115.

Belongs to the NDK family. In terms of assembly, homotetramer. Mg(2+) is required as a cofactor.

The protein localises to the cytoplasm. The catalysed reaction is a 2'-deoxyribonucleoside 5'-diphosphate + ATP = a 2'-deoxyribonucleoside 5'-triphosphate + ADP. It carries out the reaction a ribonucleoside 5'-diphosphate + ATP = a ribonucleoside 5'-triphosphate + ADP. In terms of biological role, major role in the synthesis of nucleoside triphosphates other than ATP. The ATP gamma phosphate is transferred to the NDP beta phosphate via a ping-pong mechanism, using a phosphorylated active-site intermediate. This Roseiflexus sp. (strain RS-1) protein is Nucleoside diphosphate kinase.